Reading from the N-terminus, the 92-residue chain is UPF0250 protein VP0718 (92 aa).

This sequence belongs to the UPF0250 family.

This is UPF0250 protein VP0718 from Vibrio parahaemolyticus serotype O3:K6 (strain RIMD 2210633).